The sequence spans 186 residues: Der GTPase-activating protein YihI (186 aa).

The segment at 39 to 77 (LDAKAREDKKKRKHKGLASGSRHSAVEEKANKLQNEIKD) is disordered. Residues 62–77 (SAVEEKANKLQNEIKD) are compositionally biased toward basic and acidic residues.

Belongs to the YihI family. As to quaternary structure, interacts with Der.

A GTPase-activating protein (GAP) that modifies Der/EngA GTPase function. May play a role in ribosome biogenesis. This is Der GTPase-activating protein YihI from Haemophilus influenzae (strain 86-028NP).